A 255-amino-acid chain; its full sequence is 3-deoxy-manno-octulosonate cytidylyltransferase (255 aa).

Belongs to the KdsB family.

The protein resides in the cytoplasm. The enzyme catalyses 3-deoxy-alpha-D-manno-oct-2-ulosonate + CTP = CMP-3-deoxy-beta-D-manno-octulosonate + diphosphate. It participates in nucleotide-sugar biosynthesis; CMP-3-deoxy-D-manno-octulosonate biosynthesis; CMP-3-deoxy-D-manno-octulosonate from 3-deoxy-D-manno-octulosonate and CTP: step 1/1. It functions in the pathway bacterial outer membrane biogenesis; lipopolysaccharide biosynthesis. Activates KDO (a required 8-carbon sugar) for incorporation into bacterial lipopolysaccharide in Gram-negative bacteria. In Xanthobacter autotrophicus (strain ATCC BAA-1158 / Py2), this protein is 3-deoxy-manno-octulosonate cytidylyltransferase.